The chain runs to 263 residues: SPRY domain-containing SOCS box protein 2 (263 aa).

Polar residues predominate over residues 1–16 (MGQTALAGGSSSTPTP). A disordered region spans residues 1–48 (MGQTALAGGSSSTPTPQALYPDLSCPEGLEELLSAPPPDLGAQRRHGW). The 196-residue stretch at 26–221 (PEGLEELLSA…VRIRYLGERR (196 aa)) folds into the B30.2/SPRY domain. Positions 222 to 263 (AEPHSLLHLSRLCVRHNLGDTRLGQVSALPLPPAMKRYLLYQ) constitute an SOCS box domain.

Belongs to the SPSB family. In terms of assembly, component of the probable ECS(SPSB2) E3 ubiquitin-protein ligase complex which contains CUL5, RNF7/RBX2, Elongin BC complex and SPSB2. Interacts with CUL5, RNF7, ELOB and ELOC. Interacts with MET. Interacts (via B30.2/SPRY domain) with PAWR; this interaction occurs in association with the Elongin BC complex. Interacts with NOS2. As to quaternary structure, (Microbial infection) Interacts (via C-terminus) with HCV envelope glycoprotein E1. Interacts (via C-terminus) with HCV non-structural protein 5A; this interaction targets NS5A for ubiquitination and degradation.

The protein resides in the cytoplasm. Its subcellular location is the cytosol. The protein operates within protein modification; protein ubiquitination. Substrate recognition component of a SCF-like ECS (Elongin BC-CUL2/5-SOCS-box protein) E3 ubiquitin-protein ligase complex which mediates the ubiquitination and subsequent proteasomal degradation of target proteins. Negatively regulates nitric oxide (NO) production and limits cellular toxicity in activated macrophages by mediating the ubiquitination and proteasomal degradation of NOS2. Acts as a bridge which links NOS2 with the ECS E3 ubiquitin ligase complex components ELOC and CUL5. The sequence is that of SPRY domain-containing SOCS box protein 2 (SPSB2) from Homo sapiens (Human).